Here is an 802-residue protein sequence, read N- to C-terminus: Osmosensitive cation channel TMEM63C (802 aa).

Residues 1–35 lie on the Extracellular side of the membrane; it reads MTASPESMGQKFRNMTANECFQSRSTVLQGQPFGG. Residues 36 to 60 form a helical membrane-spanning segment; it reads IPTVLLLNIILWVCVVLVYSFLRKA. Residues 61–124 lie on the Cytoplasmic side of the membrane; it reads AWDYGRLALL…RDRDLINKCG (64 aa). Phosphoserine occurs at positions 75 and 78. Residues 125–157 traverse the membrane as a helical segment; sequence EDARIYIMFQYHLIIFVLILCIPSLGIILPVNY. Topologically, residues 158–180 are extracellular; sequence IGSALDWSSHFGRTTIVNVSTES. Residues 181 to 205 form a helical membrane-spanning segment; it reads QFLWLHSIFAFMYFLTNFAFMGHHC. Topologically, residues 206–401 are cytoplasmic; it reads LGFVPKKNLH…IIWKHLSIRR (196 aa). Residues 402-431 traverse the membrane as a helical segment; that stretch reads FSWWARFIAINTSLFFLFFFLTTPAIIINT. The Extracellular portion of the chain corresponds to 432 to 446; the sequence is IDMYNVTRPIEKLQS. A helical membrane pass occupies residues 447–476; that stretch reads PVVTQFFPSVLLWAFTVIMPLLVYFSAFLE. The Cytoplasmic portion of the chain corresponds to 477–480; the sequence is AHWT. A helical membrane pass occupies residues 481–517; it reads RSNQNLIIMYKCYIFLVFMVVILPSMGLTSLDVFLRW. The Extracellular segment spans residues 518 to 540; that stretch reads LFDIYYLEHATIRFQCVFLPDNG. The chain crosses the membrane as a helical span at residues 541–573; sequence AFFINYVITSALFGTGMELMRLGSLCTYCTRLF. The Cytoplasmic segment spans residues 574–593; it reads LSRSEPERVHIRKNLAMDFQ. The helical transmembrane segment at 594-612 threads the bilayer; sequence FGREYAWMLNVFSVVMAYS. Topologically, residues 613 to 615 are extracellular; the sequence is ITC. A helical membrane pass occupies residues 616 to 640; sequence PIIVPFGLLYLCMKHITDRYNMYYS. Residues 641–647 lie on the Cytoplasmic side of the membrane; that stretch reads YAPTKLN. The chain crosses the membrane as a helical span at residues 648–676; it reads AQIHMAAVYQAIFAPLLGLFWMLFFSILR. Residues 677-681 are Extracellular-facing; sequence VGSLH. A helical transmembrane segment spans residues 682-702; that stretch reads SITLFSLSSIIISVIIAFSGV. Residues 703–802 lie on the Cytoplasmic side of the membrane; sequence FLGKFRIAQQ…EGLELEGQSH (100 aa). The disordered stretch occupies residues 753–785; it reads TPASSPARHTYGTMNSQPEEGEEESGLRGFARE.

It belongs to the CSC1 (TC 1.A.17) family. In terms of assembly, monomer. In terms of tissue distribution, expressed in podocytes of kidney glomeruli.

It is found in the endoplasmic reticulum membrane. Its subcellular location is the cell membrane. The enzyme catalyses Ca(2+)(in) = Ca(2+)(out). Functionally, acts as an osmosensitive cation channel preferentially activated upon hypotonic stress. In contrast to TMEM63B, does not show phospholipid scramblase activity. Enriched in mitochondria-ER contact sites where it may regulate the metabolite flux and organelles' morphologies in response to osmotic changes. In particular may regulate mitochondrial motility and function in motor neuron axons. Required for the functional integrity of the kidney glomerular filtration barrier. The protein is Osmosensitive cation channel TMEM63C (Tmem63c) of Rattus norvegicus (Rat).